Here is a 1060-residue protein sequence, read N- to C-terminus: Outer capsid protein VP2 (1060 aa).

Belongs to the orbivirus VP2 family.

The protein localises to the virion. In terms of biological role, the VP2 protein is one of the two proteins (with VP5) which constitute the virus particle outer capsid. It is the major target of the host immunogenic response. The sequence is that of Outer capsid protein VP2 (Segment-2) from Camelus dromedarius (Dromedary).